The sequence spans 166 residues: Stress response protein NhaX (166 aa).

The protein belongs to the universal stress protein A family.

In Bacillus subtilis (strain 168), this protein is Stress response protein NhaX (nhaX).